A 354-amino-acid chain; its full sequence is Homer protein homolog 2 (354 aa).

In terms of domain architecture, WH1 spans 1–110 (MGEQPIFTTR…EKFQEVREAA (110 aa)). Positions 92 to 120 (SEQQLTKFAEKFQEVREAARLARDKSQEK) form a coiled coil. Residues 114-163 (RDKSQEKIETSSNHSQESGCETPSSTQASSVNGTDDEKASHASPADTHLK) are disordered. The span at 123-146 (TSSNHSQESGCETPSSTQASSVNG) shows a compositional bias: polar residues. Residues 160 to 329 (THLKSENDKL…RHLKGELKSF (170 aa)) adopt a coiled-coil conformation.

Belongs to the Homer family. In terms of assembly, isoform 1 and isoform 2 encode coiled-coil structures that mediate homo- and heteromultimerization. Interacts with NFATC2; interaction is reduced by AKT activation. Interacts with NFATC1 and NFATC4. Interacts with DAGLA (via PPXXF motif); this interaction is required for the cell membrane localization of DAGLA. In terms of tissue distribution, constitutively expressed in the adult hippocampus.

Its subcellular location is the cytoplasm. It is found in the cell membrane. The protein localises to the postsynaptic density. It localises to the synapse. The protein resides in the cell projection. Its subcellular location is the stereocilium. Functionally, postsynaptic density scaffolding protein. Binds and cross-links cytoplasmic regions of GRM1, GRM5, ITPR1, DNM3, RYR1, RYR2, SHANK1 and SHANK3. By physically linking GRM1 and GRM5 with ER-associated ITPR1 receptors, it aids the coupling of surface receptors to intracellular calcium release. May also couple GRM1 to PI3 kinase through its interaction with AGAP2. Isoforms can be differently regulated and may play an important role in maintaining the plasticity at glutamatergic synapses. Required for normal hearing. Negatively regulates T cell activation by inhibiting the calcineurin-NFAT pathway. Acts by competing with calcineurin/PPP3CA for NFAT protein binding, hence preventing NFAT activation by PPP3CA. This is Homer protein homolog 2 from Rattus norvegicus (Rat).